Here is a 216-residue protein sequence, read N- to C-terminus: Glutathione S-transferase 1, isoform B (216 aa).

Residues 1-80 (MDFYYLPGSA…YLVEKYGKPC (80 aa)) enclose the GST N-terminal domain. Residues serine 9, 50–52 (HCV), and 64–66 (ESR) each bind glutathione. Residues 89-210 (DPQKRAIVNQ…RSWAEAARPF (122 aa)) enclose the GST C-terminal domain.

The protein belongs to the GST superfamily. Theta family. In terms of assembly, homodimer.

The catalysed reaction is RX + glutathione = an S-substituted glutathione + a halide anion + H(+). Its function is as follows. Conjugation of reduced glutathione to a wide number of exogenous and endogenous hydrophobic electrophiles. This chain is Glutathione S-transferase 1, isoform B, found in Anopheles gambiae (African malaria mosquito).